The chain runs to 78 residues: Acyl carrier protein (78 aa).

Positions 2 to 77 constitute a Carrier domain; the sequence is STIEERVKKI…AAIDYIEAAN (76 aa). Ser37 is modified (O-(pantetheine 4'-phosphoryl)serine).

Belongs to the acyl carrier protein (ACP) family. Post-translationally, 4'-phosphopantetheine is transferred from CoA to a specific serine of apo-ACP by AcpS. This modification is essential for activity because fatty acids are bound in thioester linkage to the sulfhydryl of the prosthetic group.

It localises to the cytoplasm. Its pathway is lipid metabolism; fatty acid biosynthesis. Its function is as follows. Carrier of the growing fatty acid chain in fatty acid biosynthesis. This chain is Acyl carrier protein, found in Edwardsiella ictaluri (strain 93-146).